The following is a 315-amino-acid chain: Aspartate carbamoyltransferase catalytic subunit (315 aa).

Arginine 61 and threonine 62 together coordinate carbamoyl phosphate. Lysine 90 provides a ligand contact to L-aspartate. Carbamoyl phosphate is bound by residues arginine 111, histidine 139, and glutamine 142. L-aspartate contacts are provided by arginine 172 and arginine 234. Residues leucine 274 and proline 275 each coordinate carbamoyl phosphate.

It belongs to the aspartate/ornithine carbamoyltransferase superfamily. ATCase family. As to quaternary structure, heterooligomer of catalytic and regulatory chains.

It carries out the reaction carbamoyl phosphate + L-aspartate = N-carbamoyl-L-aspartate + phosphate + H(+). It participates in pyrimidine metabolism; UMP biosynthesis via de novo pathway; (S)-dihydroorotate from bicarbonate: step 2/3. Its function is as follows. Catalyzes the condensation of carbamoyl phosphate and aspartate to form carbamoyl aspartate and inorganic phosphate, the committed step in the de novo pyrimidine nucleotide biosynthesis pathway. This Hyperthermus butylicus (strain DSM 5456 / JCM 9403 / PLM1-5) protein is Aspartate carbamoyltransferase catalytic subunit.